The chain runs to 404 residues: Pre-heme d1 synthase (404 aa).

Positions 22–235 (GTPKPVVIWN…LIARALESAE (214 aa)) constitute a Radical SAM core domain. Positions 36, 40, 43, 340, 343, 349, and 371 each coordinate [4Fe-4S] cluster.

The protein belongs to the radical SAM superfamily. [4Fe-4S] cluster is required as a cofactor.

The protein operates within porphyrin-containing compound metabolism. Functionally, involved in heme d1 biosynthesis. Radical SAM enzyme that catalyzes the removal of two propionate side chains from the intermediate 12,18-didecarboxysiroheme (DDSH) and may introduce the keto functions on rings A and B, yielding the heme d1 precursor dihydro-heme d1. The protein is Pre-heme d1 synthase of Dinoroseobacter shibae (strain DSM 16493 / NCIMB 14021 / DFL 12).